Consider the following 263-residue polypeptide: ATP synthase subunit a (263 aa).

The next 5 membrane-spanning stretches (helical) occupy residues 31 to 51, 89 to 109, 133 to 153, 205 to 225, and 235 to 255; these read LDTL…FYSI, IGSL…MDLI, DPNA…VYTF, LFGN…LPFW, and AIFH…LTIV.

It belongs to the ATPase A chain family. F-type ATPases have 2 components, CF(1) - the catalytic core - and CF(0) - the membrane proton channel. CF(1) has five subunits: alpha(3), beta(3), gamma(1), delta(1), epsilon(1). CF(0) has three main subunits: a(1), b(2) and c(9-12). The alpha and beta chains form an alternating ring which encloses part of the gamma chain. CF(1) is attached to CF(0) by a central stalk formed by the gamma and epsilon chains, while a peripheral stalk is formed by the delta and b chains.

It localises to the cell inner membrane. In terms of biological role, key component of the proton channel; it plays a direct role in the translocation of protons across the membrane. The protein is ATP synthase subunit a of Dichelobacter nodosus (strain VCS1703A).